The chain runs to 314 residues: MTDSTLRHITVLLDEAVEGLAVRADGCYIDGTFGRGGHSRLILHKLGPGGRLLGFDKDPLAIATGEALAAEDGRFVVVQRSFAELGDEAVVRGISGQVSGVLLDLGVSSPQLDDPERGFSFLNDGPLDMRMNPDVGVSAADWIATAEEDEIARVLKDYGEERFAKRMARAVVQRREQQPFTRTADLAKVLTEANPAWEKGKNPATRAFQGIRIYVNNELGDLERGLDAALEALEVGGRLVVISFHSLEDRIVKQFMKRQAKGEADKLPRDLPIIPKAFEPRLKLIGKPVYAGDAELKANPRSRSAVMRIAEKLR.

Residues 36–38 (GGH), aspartate 56, phenylalanine 82, aspartate 104, and glutamine 111 each bind S-adenosyl-L-methionine.

This sequence belongs to the methyltransferase superfamily. RsmH family.

It is found in the cytoplasm. It catalyses the reaction cytidine(1402) in 16S rRNA + S-adenosyl-L-methionine = N(4)-methylcytidine(1402) in 16S rRNA + S-adenosyl-L-homocysteine + H(+). In terms of biological role, specifically methylates the N4 position of cytidine in position 1402 (C1402) of 16S rRNA. In Ectopseudomonas mendocina (strain ymp) (Pseudomonas mendocina), this protein is Ribosomal RNA small subunit methyltransferase H.